The following is a 441-amino-acid chain: MSHEGEEDLLEYSDNEQDIQVDASKAAEPSELDATTAEDASNGDAEKKGSYVGIHSTGFKDFLLKPELARAIIDCGFEHPSEVQQHTIPQSIHGTDVLCQAKSGLGKTAVFVLSTLQQLDPVPGEVSVVVICNARELAYQIRNEYLRFSKYMPDVKTAVFYGGTPINKDAELLKNKETAPHIVVATPGRLKALVRDKLIDLSHVKNFVIDECDKVLEELDMRRDVQDIFRATPRDKQVMMFSATLSEEIRPICRRFLQNPLEIFVDDEAKLTLHGLQQYYTKLQENEKNRKLAQLLDDLEFNQVIIFVKSTKRANELTKLLNESNFPAITVHGHMKQAERIARYKAFKEFEKRICVSTDVFGRGIDIERINLAINYDLTTEADQYLHRVGRAGRFGTKGLAISFVSSPEDEEVLGKIQERFDVKIAEFPEEGIDPSTYLNN.

The span at M1–I19 shows a compositional bias: acidic residues. A disordered region spans residues M1 to E46. The short motif at T57–Q85 is the Q motif element. One can recognise a Helicase ATP-binding domain in the interval I88–I263. An ATP-binding site is contributed by A101–T108. A DECD box motif is present at residues D210 to D213. In terms of domain architecture, Helicase C-terminal spans K291–S436.

Belongs to the DEAD box helicase family. DECD subfamily.

The protein localises to the nucleus. The enzyme catalyses ATP + H2O = ADP + phosphate + H(+). ATP-binding RNA helicase involved in transcription elongation and required for the export of mRNA out of the nucleus. SUB2 also plays a role in pre-mRNA splicing and spliceosome assembly. May be involved in rDNA and telomeric silencing, and maintenance of genome integrity. This Vanderwaltozyma polyspora (strain ATCC 22028 / DSM 70294 / BCRC 21397 / CBS 2163 / NBRC 10782 / NRRL Y-8283 / UCD 57-17) (Kluyveromyces polysporus) protein is ATP-dependent RNA helicase SUB2-1 (SUB2-1).